We begin with the raw amino-acid sequence, 485 residues long: MTDIINKLQAFADANPQSIAVRHTTDELTYQQLMDESSKLAHRLQGSKKPMILFGHMSPYMIVGMIGAIKAGCGYVPVDTSIPEDRIKMIINKVQPEFVFNTTDESFESLAGEVFTIEDIKTSQDPVIFDSQIKDNDTVYTIFTSGSTGEPKGVQIEYASLVQFTEWMLELNKSGNEQQWLNQAPFSFDLSVMAIYPCLASGGTLNLVDKNMINKPKLLNEMLTATPINIWVSTPSFMEMCLLLPTLNEEQYGSLNEFFFCGEILPHRAAKALVSRFPSATIYNTYGPTEATVAVTSIQITQEILDQYPTLPVGVERPGARLSTTDEGELVIEGQSVSLGYLKNDQKTAEVFNFDDGIRTYHTGDKAKFENGQWFIQGRIDFQIKLNGYRMELEEIETQLRQSEFVKEAIVVPVYKNDKVIHLIGAIVPTTEVTDNAEMTKNIKNDLKSRLPEYMIPRKFEWMEQLPLTSNGKIDRKKIAEVING.

An ATP-binding site is contributed by 144 to 145; sequence TS. Aspartate 189 contacts D-alanine. Position 284-289 (284-289) interacts with ATP; it reads NTYGPT. D-alanine is bound at residue valine 293. Residues aspartate 365 and lysine 473 each coordinate ATP. Residue lysine 473 participates in D-alanine binding.

This sequence belongs to the ATP-dependent AMP-binding enzyme family. DltA subfamily.

It localises to the cytoplasm. It carries out the reaction holo-[D-alanyl-carrier protein] + D-alanine + ATP = D-alanyl-[D-alanyl-carrier protein] + AMP + diphosphate. The protein operates within cell wall biogenesis; lipoteichoic acid biosynthesis. Its function is as follows. Catalyzes the first step in the D-alanylation of lipoteichoic acid (LTA), the activation of D-alanine and its transfer onto the D-alanyl carrier protein (Dcp) DltC. In an ATP-dependent two-step reaction, forms a high energy D-alanyl-AMP intermediate, followed by transfer of the D-alanyl residue as a thiol ester to the phosphopantheinyl prosthetic group of the Dcp. D-alanylation of LTA plays an important role in modulating the properties of the cell wall in Gram-positive bacteria, influencing the net charge of the cell wall. This is D-alanine--D-alanyl carrier protein ligase from Staphylococcus aureus (strain MRSA252).